The chain runs to 286 residues: MRHTDRFVKKVVIERIGDQRVLAEEEDVVIKEERISLYLNGTKLMSMMSLPSDQDAHAVGFLMSEGVIEKIEDLKSVQISSDGSSVYVEALINHENITNLFKEKTLTSGCCVGVTGNLEGNVLRKFIATPMQISLERIWEGMEEFEMSSHLFHETGCVHKASLLLEDGSKITAEDIGRHNAIDKVMGKARLGRIDTEKAVLVVSGRLSMEMVVKAVMHNIPMIVSRAAATFLGIKTAQELGVTLVGFARGEKMNIYTHSGRVDLRACKRKRGVTLHAPNQSSSLLR.

The Cysteine persulfide intermediate role is filled by cysteine 110. 247-252 (FARGEK) is a Mo-bis(molybdopterin guanine dinucleotide) binding site.

Belongs to the FdhD family.

The protein localises to the cytoplasm. Functionally, required for formate dehydrogenase (FDH) activity. Acts as a sulfur carrier protein that transfers sulfur from IscS to the molybdenum cofactor prior to its insertion into FDH. The sequence is that of Sulfur carrier protein FdhD from Wolinella succinogenes (strain ATCC 29543 / DSM 1740 / CCUG 13145 / JCM 31913 / LMG 7466 / NCTC 11488 / FDC 602W) (Vibrio succinogenes).